Consider the following 111-residue polypeptide: Disintegrin Eo1 subunit 1 (111 aa).

The signal sequence occupies residues 1 to 20 (MIQVLLVIICLAVFPYQGSS). The propeptide occupies 21–46 (IILESGNVNDFELVYPKKVTVLPTGA). Positions 26–111 (GNVNDFELVY…SDCPRNPWKD (86 aa)) constitute a Disintegrin domain. Cystine bridges form between Cys-53/Cys-76, Cys-67/Cys-73, Cys-72/Cys-97, and Cys-85/Cys-104. The Cell attachment site; atypical (WGD) signature appears at 89–91 (WGD). Positions 110-111 (KD) are excised as a propeptide.

It belongs to the disintegrin family. Dimeric disintegrin subfamily. In terms of assembly, heterodimer; disulfide-linked. Expressed by the venom gland.

It is found in the secreted. Functionally, poor inhibitor of platelet aggregation. The disintegrin inhibits the adhesion of cells expressing the RGD-dependent integrin alpha-5/beta-1 (ITGA5/ITGB1) to immobilized fibronectin. Inhibition on alpha-IIb/beta-3 (ITGA2B/ITGB3) is low. In Echis ocellatus (Ocellated saw-scaled viper), this protein is Disintegrin Eo1 subunit 1.